The sequence spans 388 residues: Fetuin-B (388 aa).

The signal sequence occupies residues 1 to 18 (MGLLRLLVLCTLAACCMA). Cystatin fetuin-B-type domains lie at 28-141 (QRPL…YNCT) and 152-264 (TTCP…VTCE). Residue asparagine 40 is glycosylated (N-linked (GlcNAc...) asparagine). 5 cysteine pairs are disulfide-bonded: cysteine 96–cysteine 107, cysteine 120–cysteine 140, cysteine 154–cysteine 157, cysteine 217–cysteine 224, and cysteine 237–cysteine 263. Asparagine 139 is a glycosylation site (N-linked (GlcNAc...) asparagine). 2 disordered regions span residues 270 to 343 (AQVP…PQGD) and 367 to 388 (KEQRSAECPGPEKENNPLVLPP). Residues 279–300 (AVTQGPQKLPQKNTAPTSSPSV) show a composition bias toward polar residues. Residues threonine 292 and threonine 295 are each glycosylated (O-linked (GalNAc...) threonine). Serine 321 is modified (phosphoserine). The segment covering 367 to 381 (KEQRSAECPGPEKEN) has biased composition (basic and acidic residues).

Belongs to the fetuin family. As to expression, liver, lung and tongue.

The protein resides in the secreted. Protease inhibitor required for egg fertilization. Required to prevent premature zona pellucida hardening before fertilization, probably by inhibiting the protease activity of ASTL, a protease that mediates the cleavage of ZP2 and triggers zona pellucida hardening. The sequence is that of Fetuin-B (Fetub) from Mus musculus (Mouse).